The primary structure comprises 84 residues: uncharacterized protein (84 aa).

Composition is skewed to basic residues over residues 1–15 (MPPH…HGHH) and 67–84 (HHGH…GHFF). Disordered regions lie at residues 1-22 (MPPH…TYTT) and 64-84 (TSHH…GHFF).

This is an uncharacterized protein from Dictyostelium discoideum (Social amoeba).